Reading from the N-terminus, the 871-residue chain is Alanine--tRNA ligase (871 aa).

Zn(2+)-binding residues include His-561, His-565, Cys-665, and His-669.

The protein belongs to the class-II aminoacyl-tRNA synthetase family. The cofactor is Zn(2+).

Its subcellular location is the cytoplasm. The enzyme catalyses tRNA(Ala) + L-alanine + ATP = L-alanyl-tRNA(Ala) + AMP + diphosphate. In terms of biological role, catalyzes the attachment of alanine to tRNA(Ala) in a two-step reaction: alanine is first activated by ATP to form Ala-AMP and then transferred to the acceptor end of tRNA(Ala). Also edits incorrectly charged Ser-tRNA(Ala) and Gly-tRNA(Ala) via its editing domain. The sequence is that of Alanine--tRNA ligase from Dehalococcoides mccartyi (strain ATCC BAA-2266 / KCTC 15142 / 195) (Dehalococcoides ethenogenes (strain 195)).